A 258-amino-acid chain; its full sequence is Phosphosulfolactate synthase (258 aa).

This sequence belongs to the phosphosulfolactate synthase family.

It carries out the reaction (2R)-O-phospho-3-sulfolactate = phosphoenolpyruvate + sulfite + H(+). It participates in cofactor biosynthesis; coenzyme M biosynthesis; sulfoacetaldehyde from phosphoenolpyruvate and sulfite: step 1/4. Its function is as follows. Catalyzes the addition of sulfite to phosphoenolpyruvate (PEP) to yield (2R)-phospho-3-sulfolactate (PSL). This chain is Phosphosulfolactate synthase (comA), found in Methanothermobacter thermautotrophicus (strain ATCC 29096 / DSM 1053 / JCM 10044 / NBRC 100330 / Delta H) (Methanobacterium thermoautotrophicum).